The primary structure comprises 220 residues: 7-cyano-7-deazaguanine synthase (220 aa).

ATP is bound at residue leucine 7 to alanine 17. Zn(2+) contacts are provided by cysteine 187, cysteine 195, cysteine 198, and cysteine 201.

Belongs to the QueC family. The cofactor is Zn(2+).

It carries out the reaction 7-carboxy-7-deazaguanine + NH4(+) + ATP = 7-cyano-7-deazaguanine + ADP + phosphate + H2O + H(+). Its pathway is purine metabolism; 7-cyano-7-deazaguanine biosynthesis. Catalyzes the ATP-dependent conversion of 7-carboxy-7-deazaguanine (CDG) to 7-cyano-7-deazaguanine (preQ(0)). This is 7-cyano-7-deazaguanine synthase from Methanospirillum hungatei JF-1 (strain ATCC 27890 / DSM 864 / NBRC 100397 / JF-1).